A 297-amino-acid polypeptide reads, in one-letter code: uncharacterized protein (297 aa).

The segment at 1–29 (MAESKAKNMFQKLSLTPKRNHEHDAGRNI) is disordered. Basic and acidic residues predominate over residues 19-29 (RNHEHDAGRNI).

This is an uncharacterized protein from Caenorhabditis elegans.